A 561-amino-acid polypeptide reads, in one-letter code: Urocanate hydratase (561 aa).

NAD(+)-binding positions include 52-53, Gln130, 176-178, Glu196, Arg201, 242-243, 263-267, 273-274, and Tyr322; these read GG, GMG, NA, QTSAH, and YL. The active site involves Cys410. Gly492 is a binding site for NAD(+).

The protein belongs to the urocanase family. Requires NAD(+) as cofactor.

It is found in the cytoplasm. It carries out the reaction 4-imidazolone-5-propanoate = trans-urocanate + H2O. It functions in the pathway amino-acid degradation; L-histidine degradation into L-glutamate; N-formimidoyl-L-glutamate from L-histidine: step 2/3. In terms of biological role, catalyzes the conversion of urocanate to 4-imidazolone-5-propionate. This chain is Urocanate hydratase, found in Citrobacter koseri (strain ATCC BAA-895 / CDC 4225-83 / SGSC4696).